Reading from the N-terminus, the 159-residue chain is SsrA-binding protein (159 aa).

Belongs to the SmpB family.

It is found in the cytoplasm. Required for rescue of stalled ribosomes mediated by trans-translation. Binds to transfer-messenger RNA (tmRNA), required for stable association of tmRNA with ribosomes. tmRNA and SmpB together mimic tRNA shape, replacing the anticodon stem-loop with SmpB. tmRNA is encoded by the ssrA gene; the 2 termini fold to resemble tRNA(Ala) and it encodes a 'tag peptide', a short internal open reading frame. During trans-translation Ala-aminoacylated tmRNA acts like a tRNA, entering the A-site of stalled ribosomes, displacing the stalled mRNA. The ribosome then switches to translate the ORF on the tmRNA; the nascent peptide is terminated with the 'tag peptide' encoded by the tmRNA and targeted for degradation. The ribosome is freed to recommence translation, which seems to be the essential function of trans-translation. This chain is SsrA-binding protein, found in Mycobacteroides abscessus (strain ATCC 19977 / DSM 44196 / CCUG 20993 / CIP 104536 / JCM 13569 / NCTC 13031 / TMC 1543 / L948) (Mycobacterium abscessus).